The chain runs to 344 residues: tRNA N6-adenosine threonylcarbamoyltransferase (344 aa).

Residues H110 and H114 each contribute to the Fe cation site. Substrate-binding positions include 133–137 (VVSGA), D166, G179, and N278. A Fe cation-binding site is contributed by D303.

This sequence belongs to the KAE1 / TsaD family. Fe(2+) is required as a cofactor.

It is found in the cytoplasm. The catalysed reaction is L-threonylcarbamoyladenylate + adenosine(37) in tRNA = N(6)-L-threonylcarbamoyladenosine(37) in tRNA + AMP + H(+). Required for the formation of a threonylcarbamoyl group on adenosine at position 37 (t(6)A37) in tRNAs that read codons beginning with adenine. Is involved in the transfer of the threonylcarbamoyl moiety of threonylcarbamoyl-AMP (TC-AMP) to the N6 group of A37, together with TsaE and TsaB. TsaD likely plays a direct catalytic role in this reaction. This is tRNA N6-adenosine threonylcarbamoyltransferase from Chlamydia abortus (strain DSM 27085 / S26/3) (Chlamydophila abortus).